We begin with the raw amino-acid sequence, 276 residues long: Rhomboid protease GlpG (276 aa).

6 helical membrane-spanning segments follow: residues 94–114, 142–162, 169–189, 192–212, 229–249, and 250–270; these read GPVT…MQIL, ALMH…WYLG, LGSG…GYVQ, FSGP…GYVW, LIIF…GMSM, and ANGA…VDSL. Serine 201 serves as the catalytic Nucleophile. Histidine 254 is an active-site residue.

The protein belongs to the peptidase S54 family.

The protein localises to the cell inner membrane. It carries out the reaction Cleaves type-1 transmembrane domains using a catalytic dyad composed of serine and histidine that are contributed by different transmembrane domains.. In terms of biological role, rhomboid-type serine protease that catalyzes intramembrane proteolysis. This Shigella boydii serotype 4 (strain Sb227) protein is Rhomboid protease GlpG.